Here is a 295-residue protein sequence, read N- to C-terminus: Ribosomal protein L11 methyltransferase (295 aa).

4 residues coordinate S-adenosyl-L-methionine: Thr150, Gly171, Asp193, and Asn232.

The protein belongs to the methyltransferase superfamily. PrmA family.

It localises to the cytoplasm. The enzyme catalyses L-lysyl-[protein] + 3 S-adenosyl-L-methionine = N(6),N(6),N(6)-trimethyl-L-lysyl-[protein] + 3 S-adenosyl-L-homocysteine + 3 H(+). Methylates ribosomal protein L11. The sequence is that of Ribosomal protein L11 methyltransferase from Neisseria gonorrhoeae (strain ATCC 700825 / FA 1090).